Consider the following 363-residue polypeptide: Diheme-cytochrome-encapsulin shell fusion protein (363 aa).

An N-terminal signal peptide occupies residues 1-36 (MVMGILNTFKKVYAVTGFFALLAVFSLSQVGSSAFA). Positions 37-74 (ACAKVDDCFSCHTTQELNAVHKNTPYQGQSCIVCHKAF) are diheme c-type cytochrome. 6 residues coordinate heme: Cys44, Cys47, His48, Cys67, Cys70, and His71. The segment at 75–94 (AADDTCSDAKDGRFAKISSE) is linker. The segment at 95–363 (ININKEDWNK…KCPQAICTLE (269 aa)) is encapsulin domain.

Belongs to the encapsulin family. Family 1 subfamily. The encapsulin nanocompartment is probably formed by 180 monomers, with the N-terminus (diheme domain) inside. There are 36 pores where the pentamers meet as well as 3-fold axis channels and dimer channels. The cofactor is heme.

The protein localises to the encapsulin nanocompartment. Functionally, fusion of the shell and cargo protein of a type 1 encapsulin nanocompartment. Protein missing its signal peptide makes 33 nm particles in E.coli (called cEnc), protein missing its signal peptide and diheme domain (residues 1-86, called Enc) makes 29 nm particles. The cEnc nancompartment encloses c-type heme. The cargo protein NIR-HAO (AC P0DV45) is probably targeted to the nanocompartment by its association with the diheme domain in cEnc; removal of the diheme domain in Enc halves the amount of cargo. In Kuenenia stuttgartiensis, this protein is Diheme-cytochrome-encapsulin shell fusion protein.